Reading from the N-terminus, the 184-residue chain is UPF0340 protein TTE0860 (184 aa).

Belongs to the UPF0340 family.

In Caldanaerobacter subterraneus subsp. tengcongensis (strain DSM 15242 / JCM 11007 / NBRC 100824 / MB4) (Thermoanaerobacter tengcongensis), this protein is UPF0340 protein TTE0860.